Here is a 397-residue protein sequence, read N- to C-terminus: Succinyl-diaminopimelate desuccinylase (397 aa).

Histidine 73 contacts Zn(2+). Aspartate 75 is an active-site residue. A Zn(2+)-binding site is contributed by aspartate 106. The active-site Proton acceptor is the glutamate 140. The Zn(2+) site is built by glutamate 141, glutamate 169, and histidine 366.

The protein belongs to the peptidase M20A family. DapE subfamily. As to quaternary structure, homodimer. The cofactor is Zn(2+). Requires Co(2+) as cofactor.

The catalysed reaction is N-succinyl-(2S,6S)-2,6-diaminopimelate + H2O = (2S,6S)-2,6-diaminopimelate + succinate. Its pathway is amino-acid biosynthesis; L-lysine biosynthesis via DAP pathway; LL-2,6-diaminopimelate from (S)-tetrahydrodipicolinate (succinylase route): step 3/3. Its function is as follows. Catalyzes the hydrolysis of N-succinyl-L,L-diaminopimelic acid (SDAP), forming succinate and LL-2,6-diaminopimelate (DAP), an intermediate involved in the bacterial biosynthesis of lysine and meso-diaminopimelic acid, an essential component of bacterial cell walls. This is Succinyl-diaminopimelate desuccinylase from Rhizobium rhizogenes (strain K84 / ATCC BAA-868) (Agrobacterium radiobacter).